A 338-amino-acid chain; its full sequence is Ferredoxin--NADP reductase (338 aa).

D35, Q43, Y48, A88, F122, D289, and T330 together coordinate FAD.

Belongs to the ferredoxin--NADP reductase type 2 family. Homodimer. FAD is required as a cofactor.

The enzyme catalyses 2 reduced [2Fe-2S]-[ferredoxin] + NADP(+) + H(+) = 2 oxidized [2Fe-2S]-[ferredoxin] + NADPH. The sequence is that of Ferredoxin--NADP reductase from Ehrlichia canis (strain Jake).